Consider the following 435-residue polypeptide: uncharacterized protein (435 aa).

Transmembrane regions (helical) follow at residues 14–34, 44–64, 84–104, 123–143, 153–173, 187–207, 224–244, 267–287, 324–344, 346–366, 375–395, and 400–420; these read VSMA…GVGA, TFIL…KLGA, IITG…IALF, FNIA…NFFG, FIVL…LITI, VSGM…FGVI, AIFI…ISAI, FLGN…ISSA, LYIT…EGVA, ITSA…YILI, IVIF…YYQW, and FVFY…IIYR.

Its subcellular location is the cell membrane. This is an uncharacterized protein from Methanocaldococcus jannaschii (strain ATCC 43067 / DSM 2661 / JAL-1 / JCM 10045 / NBRC 100440) (Methanococcus jannaschii).